A 190-amino-acid polypeptide reads, in one-letter code: MNPISLLFLALAMSTDAFAAALGKGASLHKPRFLEALRTGLIFGAIETITPVIGWGIGQVAARFAESWDHWIAFTLLLVLGLHMIYNGIKHDDDEEQEKPGQHSFWILAVTAFATSIDALAVGVGLAFVDVNIVVAALAIGLATTVMVTIGVMLGRVLGTMVGKRAEIIGGIVLIVVGATILYEHLSAAQ.

Helical transmembrane passes span 3-23 (PISL…AALG), 41-61 (LIFG…GQVA), 69-89 (DHWI…YNGI), 105-125 (FWIL…VGVG), 133-153 (IVVA…IGVM), and 168-188 (IIGG…HLSA).

The protein belongs to the MntP (TC 9.B.29) family.

The protein resides in the cell inner membrane. Its function is as follows. Probably functions as a manganese efflux pump. This chain is Putative manganese efflux pump MntP, found in Pseudomonas syringae pv. syringae (strain B728a).